Here is a 376-residue protein sequence, read N- to C-terminus: F-box/kelch-repeat protein At1g67480 (376 aa).

The region spanning 37-85 (DPLIPGLPDDVAKQCLALVPRARFPSMGSVCKKWRFVVQSKEFITVRRL) is the F-box domain. Kelch repeat units lie at residues 139-189 (KLLV…EVNG), 190-237 (HVYV…AFNG), 239-289 (LYVM…LFCI), and 291-335 (WKNH…LLFS).

In Arabidopsis thaliana (Mouse-ear cress), this protein is F-box/kelch-repeat protein At1g67480.